We begin with the raw amino-acid sequence, 329 residues long: DNA-directed RNA polymerase subunit alpha (329 aa).

The tract at residues Met-1–Arg-234 is alpha N-terminal domain (alpha-NTD). The segment at Phe-248 to Leu-329 is alpha C-terminal domain (alpha-CTD).

The protein belongs to the RNA polymerase alpha chain family. As to quaternary structure, homodimer. The RNAP catalytic core consists of 2 alpha, 1 beta, 1 beta' and 1 omega subunit. When a sigma factor is associated with the core the holoenzyme is formed, which can initiate transcription.

The enzyme catalyses RNA(n) + a ribonucleoside 5'-triphosphate = RNA(n+1) + diphosphate. DNA-dependent RNA polymerase catalyzes the transcription of DNA into RNA using the four ribonucleoside triphosphates as substrates. The polypeptide is DNA-directed RNA polymerase subunit alpha (Shewanella denitrificans (strain OS217 / ATCC BAA-1090 / DSM 15013)).